A 1010-amino-acid polypeptide reads, in one-letter code: Lysosomal alpha-mannosidase (1010 aa).

An N-terminal signal peptide occupies residues 1 to 22 (MVIKKLFILIFCLFLIINEING). A propeptide spans 23–40 (KKTKINDIKKSKPKLSST) (pro I). Zn(2+) is bound by residues His51 and Asp53. A glycan (N-linked (GlcNAc...) asparagine) is linked at Asn68. Residues Asp173 and His420 each contribute to the Zn(2+) site. Asp173 acts as the Nucleophile in catalysis. Residues Asn480, Asn520, Asn528, Asn539, Asn623, Asn760, Asn784, Asn828, Asn954, and Asn963 are each glycosylated (N-linked (GlcNAc...) asparagine). A propeptide spans 508–595 (RNEPVRIPIP…GGGKINEKVS (88 aa)) (pro II).

Belongs to the glycosyl hydrolase 38 family. Tetramer of equimolar amounts of 60 and 58 kDa subunits. The cofactor is Zn(2+). First cleaved into the mature 58 kDa subunit and an intermediate 82 kDa subunit. The latter is then cleaved to its mature 60 kDa subunit form. These events occur in multiple intracellular compartments. The 60 kDa subunit may form one or more intramolecular disulfide bonds.

Its subcellular location is the lysosome. The enzyme catalyses Hydrolysis of terminal, non-reducing alpha-D-mannose residues in alpha-D-mannosides.. The sequence is that of Lysosomal alpha-mannosidase (manA) from Dictyostelium discoideum (Social amoeba).